Consider the following 84-residue polypeptide: Cell division topological specificity factor (84 aa).

The protein belongs to the MinE family.

Prevents the cell division inhibition by proteins MinC and MinD at internal division sites while permitting inhibition at polar sites. This ensures cell division at the proper site by restricting the formation of a division septum at the midpoint of the long axis of the cell. In Pseudomonas aeruginosa (strain LESB58), this protein is Cell division topological specificity factor.